A 710-amino-acid polypeptide reads, in one-letter code: Polyribonucleotide nucleotidyltransferase (710 aa).

Mg(2+) is bound by residues D489 and D495. The KH domain occupies 556–615 (PKIDTIKIDVDKIKVVIGKGGETIDKIIAETGVKIDIDDEGNVSIYSSDQAAIDRTKEII). Positions 625 to 693 (GEVYHAKVIR…EKGRVDASMK (69 aa)) constitute an S1 motif domain.

The protein belongs to the polyribonucleotide nucleotidyltransferase family. It depends on Mg(2+) as a cofactor.

Its subcellular location is the cytoplasm. The catalysed reaction is RNA(n+1) + phosphate = RNA(n) + a ribonucleoside 5'-diphosphate. In terms of biological role, involved in mRNA degradation. Catalyzes the phosphorolysis of single-stranded polyribonucleotides processively in the 3'- to 5'-direction. This chain is Polyribonucleotide nucleotidyltransferase, found in Streptococcus pyogenes serotype M3 (strain ATCC BAA-595 / MGAS315).